We begin with the raw amino-acid sequence, 251 residues long: Hydroxyacylglutathione hydrolase (251 aa).

Zn(2+) contacts are provided by His-53, His-55, Asp-57, His-58, His-110, Asp-127, and His-165.

It belongs to the metallo-beta-lactamase superfamily. Glyoxalase II family. As to quaternary structure, monomer. Zn(2+) serves as cofactor.

It catalyses the reaction an S-(2-hydroxyacyl)glutathione + H2O = a 2-hydroxy carboxylate + glutathione + H(+). The protein operates within secondary metabolite metabolism; methylglyoxal degradation; (R)-lactate from methylglyoxal: step 2/2. Functionally, thiolesterase that catalyzes the hydrolysis of S-D-lactoyl-glutathione to form glutathione and D-lactic acid. This chain is Hydroxyacylglutathione hydrolase, found in Shigella boydii serotype 4 (strain Sb227).